Here is a 120-residue protein sequence, read N- to C-terminus: UPF0715 membrane protein YwlA (120 aa).

The next 4 membrane-spanning stretches (helical) occupy residues 3–23, 26–46, 63–83, and 95–115; these read YNYT…VIYI, FIIA…LIFA, LYLL…FGML, and AFYL…SVLL.

This sequence belongs to the UPF0715 family.

It is found in the cell membrane. This Bacillus subtilis (strain 168) protein is UPF0715 membrane protein YwlA (ywlA).